We begin with the raw amino-acid sequence, 185 residues long: Large ribosomal subunit protein uL22 (185 aa).

The protein belongs to the universal ribosomal protein uL22 family. In terms of assembly, part of the 50S ribosomal subunit.

This protein binds specifically to 23S rRNA. It makes multiple contacts with different domains of the 23S rRNA in the assembled 50S subunit and ribosome. In terms of biological role, the globular domain of the protein is located near the polypeptide exit tunnel on the outside of the subunit, while an extended beta-hairpin is found that lines the wall of the exit tunnel in the center of the 70S ribosome. The polypeptide is Large ribosomal subunit protein uL22 (Caldivirga maquilingensis (strain ATCC 700844 / DSM 13496 / JCM 10307 / IC-167)).